Consider the following 345-residue polypeptide: Protein D345L (345 aa).

This sequence belongs to the asfivirus D345L family. As to quaternary structure, interacts with IKKA/CHUK and IKBKB.

It localises to the host cytoplasm. Functionally, plays a role in the negative regulation of host NF-kappa-B signaling pathway. Mechanistically, recruits IKKA/CHUK and IKBKB to suppress their kinase activity towards NFKBIA. The sequence is that of Protein D345L from African swine fever virus (isolate Tick/South Africa/Pretoriuskop Pr4/1996) (ASFV).